The primary structure comprises 1888 residues: Eukaryotic translation initiation factor 4G (1888 aa).

Disordered stretches follow at residues 1-259 (MSFN…PTTP), 391-420 (FDNK…TQPL), 449-662 (PLPS…SLQH), 726-761 (VAHS…KNSE), 838-903 (ADVS…DGEV), 961-1042 (AYKR…SGDR), 1083-1138 (TNVS…DPRL), 1331-1356 (GERE…EREE), 1462-1605 (KWQQ…PGDL), and 1639-1691 (RFAG…PSLP). Polar residues-rich tracts occupy residues 13–36 (GYTQ…SGTH) and 75–84 (VNSTDSSNAP). Over residues 171-183 (DEQKRDQARHESF) the composition is skewed to basic and acidic residues. Residues 185-195 (PVPPMPIPLAP) are compositionally biased toward pro residues. 4 stretches are compositionally biased toward polar residues: residues 211-231 (NVGQ…NTGD), 244-259 (ASPN…PTTP), 393-405 (NKQS…TGTS), and 458-475 (NSQP…SQNV). Basic and acidic residues predominate over residues 497 to 506 (PNREHTRDTH). Residues 586-596 (IKSSPVISKQF) are compositionally biased toward polar residues. Low complexity predominate over residues 603–630 (VSLESQDSSSVQSSLTASSEESELAVAH). Over residues 631–645 (SEVRRENLLGSDLHK) the composition is skewed to basic and acidic residues. Residues 840 to 850 (VSASVSSSSTV) show a composition bias toward low complexity. Residues 869 to 885 (NMSSNEVLKNVVKSDQP) are compositionally biased toward polar residues. Residues 963-983 (KRPEEKKETVAHSESIERTES) show a composition bias toward basic and acidic residues. Positions 1048–1093 (KKYSRDFLLKFAEQFLDLPHNFEVTSDIESLMSTHTNVSHHHDRDP) are EIF4E-binding. The segment covering 1109-1124 (RLDRRGSNLVDDDRWS) has biased composition (basic and acidic residues). One can recognise an MIF4G domain in the interval 1239–1462 (QRQLKAILNK…KDAIDLRKNK (224 aa)). 2 stretches are compositionally biased toward basic and acidic residues: residues 1467–1484 (RKVE…DAAQ) and 1661–1674 (KDLR…DRSR). Positions 1700–1824 (RLQQLSLTAI…SLREVADLIC (125 aa)) constitute an MI domain.

It belongs to the eukaryotic initiation factor 4G family. As to quaternary structure, EIF4F is a multi-subunit complex, the composition of which varies with external and internal environmental conditions. It is composed of at least EIF4A, EIF4E and EIF4G. Interacts directly with eIF4E. In higher plants two isoforms of EIF4F have been identified, named isoform EIF4F and isoform EIF(iso)4F. Isoform EIF4F has subunits p220 and p26, whereas isoform EIF(iso)4F has subunits p82 and p28.

Component of the protein complex eIF4F, which is involved in the recognition of the mRNA cap, ATP-dependent unwinding of 5'-terminal secondary structure and recruitment of mRNA to the ribosome. The chain is Eukaryotic translation initiation factor 4G from Cucumis melo (Muskmelon).